The primary structure comprises 327 residues: Putative ABC transporter ATP-binding protein MM_0887 (327 aa).

The interval 1–44 (MSKSTPLKSSIIRADLPEQAEGRTGPETGKDPEKTGNSEGKTDT) is disordered. Over residues 28 to 44 (TGKDPEKTGNSEGKTDT) the composition is skewed to basic and acidic residues. The ABC transporter domain occupies 47–282 (IEIKDLCHRY…PALLRKAHLR (236 aa)). Residue 81–88 (GANGAGKS) coordinates ATP.

The protein belongs to the ABC transporter superfamily.

It is found in the cell membrane. Functionally, probably part of an ABC transporter complex. Responsible for energy coupling to the transport system. The polypeptide is Putative ABC transporter ATP-binding protein MM_0887 (Methanosarcina mazei (strain ATCC BAA-159 / DSM 3647 / Goe1 / Go1 / JCM 11833 / OCM 88) (Methanosarcina frisia)).